The sequence spans 346 residues: Probable galacturonosyltransferase-like 6 (346 aa).

A helical; Signal-anchor for type II membrane protein membrane pass occupies residues 1–21; that stretch reads MLWITRFAGLFSAAMAVIVLS. At 22-346 the chain is on the lumenal side; the sequence is PSLQSFPPAA…TPYDLYRHSH (325 aa). Residue Asn203 is glycosylated (N-linked (GlcNAc...) asparagine).

The protein belongs to the glycosyltransferase 8 family.

The protein resides in the golgi apparatus membrane. Its pathway is glycan metabolism; pectin biosynthesis. Its function is as follows. May be involved in pectin and/or xylans biosynthesis in cell walls. This chain is Probable galacturonosyltransferase-like 6 (GATL6), found in Arabidopsis thaliana (Mouse-ear cress).